Here is a 217-residue protein sequence, read N- to C-terminus: ATP phosphoribosyltransferase (217 aa).

This sequence belongs to the ATP phosphoribosyltransferase family. Short subfamily. Heteromultimer composed of HisG and HisZ subunits.

The protein localises to the cytoplasm. It catalyses the reaction 1-(5-phospho-beta-D-ribosyl)-ATP + diphosphate = 5-phospho-alpha-D-ribose 1-diphosphate + ATP. It functions in the pathway amino-acid biosynthesis; L-histidine biosynthesis; L-histidine from 5-phospho-alpha-D-ribose 1-diphosphate: step 1/9. In terms of biological role, catalyzes the condensation of ATP and 5-phosphoribose 1-diphosphate to form N'-(5'-phosphoribosyl)-ATP (PR-ATP). Has a crucial role in the pathway because the rate of histidine biosynthesis seems to be controlled primarily by regulation of HisG enzymatic activity. The sequence is that of ATP phosphoribosyltransferase from Burkholderia multivorans (strain ATCC 17616 / 249).